The chain runs to 160 residues: Nucleotide-binding protein BAV0791 (160 aa).

The protein belongs to the YajQ family.

Its function is as follows. Nucleotide-binding protein. The chain is Nucleotide-binding protein BAV0791 from Bordetella avium (strain 197N).